The following is a 394-amino-acid chain: Candidapepsin (394 aa).

The N-terminal stretch at Met-1–Gly-23 is a signal peptide. Positions Leu-24–Arg-60 are cleaved as a propeptide — activation peptide. The N-linked (GlcNAc...) asparagine glycan is linked to Asn-50. A Peptidase A1 domain is found at Tyr-74–Ala-381. Asp-92 is an active-site residue. Cys-107 and Cys-119 are oxidised to a cystine. Asp-278 is an active-site residue. Cys-314 and Cys-347 are disulfide-bonded.

This sequence belongs to the peptidase A1 family. In terms of processing, O-glycosylated.

The protein resides in the secreted. The catalysed reaction is Preferential cleavage at the carboxyl of hydrophobic amino acids, but fails to cleave 15-Leu-|-Tyr-16, 16-Tyr-|-Leu-17 and 24-Phe-|-Phe-25 of insulin B chain. Activates trypsinogen, and degrades keratin.. In Candida tropicalis (Yeast), this protein is Candidapepsin (SAPT1).